Here is a 338-residue protein sequence, read N- to C-terminus: Lipoate-protein ligase A (338 aa).

A BPL/LPL catalytic domain is found at Pro29–Val216. ATP-binding positions include Arg71, Gly76–Phe79, and Lys134. Lys134 provides a ligand contact to (R)-lipoate.

This sequence belongs to the LplA family. In terms of assembly, monomer.

It localises to the cytoplasm. It carries out the reaction L-lysyl-[lipoyl-carrier protein] + (R)-lipoate + ATP = N(6)-[(R)-lipoyl]-L-lysyl-[lipoyl-carrier protein] + AMP + diphosphate + H(+). The protein operates within protein modification; protein lipoylation via exogenous pathway; protein N(6)-(lipoyl)lysine from lipoate: step 1/2. Its pathway is protein modification; protein lipoylation via exogenous pathway; protein N(6)-(lipoyl)lysine from lipoate: step 2/2. Functionally, catalyzes both the ATP-dependent activation of exogenously supplied lipoate to lipoyl-AMP and the transfer of the activated lipoyl onto the lipoyl domains of lipoate-dependent enzymes. The chain is Lipoate-protein ligase A from Salmonella arizonae (strain ATCC BAA-731 / CDC346-86 / RSK2980).